Here is a 74-residue protein sequence, read N- to C-terminus: Exodeoxyribonuclease 7 small subunit (74 aa).

The protein belongs to the XseB family. In terms of assembly, heterooligomer composed of large and small subunits.

The protein localises to the cytoplasm. The catalysed reaction is Exonucleolytic cleavage in either 5'- to 3'- or 3'- to 5'-direction to yield nucleoside 5'-phosphates.. Bidirectionally degrades single-stranded DNA into large acid-insoluble oligonucleotides, which are then degraded further into small acid-soluble oligonucleotides. In Ruthia magnifica subsp. Calyptogena magnifica, this protein is Exodeoxyribonuclease 7 small subunit.